The chain runs to 156 residues: MNFNATLIGQSVAFLIFVWFCMKFVWPPLMNAIEERQKRIADGLADADRAVKDLELARSKATDQLKEAKATANEIIEQANKRKAQIVDEAKAEADAERAKIIAQGKAEIEAERNRVKEDLRKQVATLAILGAEKILERSIDPAAHSDIVNKLVAEI.

The helical transmembrane segment at 7–29 (LIGQSVAFLIFVWFCMKFVWPPL) threads the bilayer.

This sequence belongs to the ATPase B chain family. F-type ATPases have 2 components, F(1) - the catalytic core - and F(0) - the membrane proton channel. F(1) has five subunits: alpha(3), beta(3), gamma(1), delta(1), epsilon(1). F(0) has three main subunits: a(1), b(2) and c(10-14). The alpha and beta chains form an alternating ring which encloses part of the gamma chain. F(1) is attached to F(0) by a central stalk formed by the gamma and epsilon chains, while a peripheral stalk is formed by the delta and b chains.

Its subcellular location is the cell inner membrane. In terms of biological role, f(1)F(0) ATP synthase produces ATP from ADP in the presence of a proton or sodium gradient. F-type ATPases consist of two structural domains, F(1) containing the extramembraneous catalytic core and F(0) containing the membrane proton channel, linked together by a central stalk and a peripheral stalk. During catalysis, ATP synthesis in the catalytic domain of F(1) is coupled via a rotary mechanism of the central stalk subunits to proton translocation. Component of the F(0) channel, it forms part of the peripheral stalk, linking F(1) to F(0). This is ATP synthase subunit b from Shewanella denitrificans (strain OS217 / ATCC BAA-1090 / DSM 15013).